A 255-amino-acid polypeptide reads, in one-letter code: Tachylectin-2 (255 aa).

The signal sequence occupies residues 1–19; sequence MKFLLVVLGFIGFLKDGIT. 5 WD repeats span residues 20–67, 68–114, 115–161, 162–208, and 209–255; these read VGGE…FLFL, SPGG…FLFF, DPNG…FLFF, HPNG…FLFF, and SSVG…FLFF.

As to quaternary structure, monomer.

It localises to the secreted. It is found in the cytoplasmic granule. In terms of biological role, lectin that binds specifically to N-acetylglucosamine and N-acetylgalactosamine. Is part of the innate immunity host defense system of the horseshoe crab. In Tachypleus tridentatus (Japanese horseshoe crab), this protein is Tachylectin-2.